The following is a 513-amino-acid chain: 2,3-bisphosphoglycerate-independent phosphoglycerate mutase (513 aa).

Residues Asp13 and Ser63 each coordinate Mn(2+). The active-site Phosphoserine intermediate is Ser63. Residues His124, 154–155, Arg186, Arg192, 262–265, and Lys335 each bind substrate; these read RD and RADR. Mn(2+)-binding residues include Asp403, His407, Asp444, His445, and His463.

Belongs to the BPG-independent phosphoglycerate mutase family. Monomer. The cofactor is Mn(2+).

It carries out the reaction (2R)-2-phosphoglycerate = (2R)-3-phosphoglycerate. It functions in the pathway carbohydrate degradation; glycolysis; pyruvate from D-glyceraldehyde 3-phosphate: step 3/5. Catalyzes the interconversion of 2-phosphoglycerate and 3-phosphoglycerate. In Myxococcus xanthus (strain DK1622), this protein is 2,3-bisphosphoglycerate-independent phosphoglycerate mutase.